Consider the following 136-residue polypeptide: MFGSVGWGELLVLLIVGLVVLGPERLPGAIRWTTESLRKVRDYASGATASLREELGPEFDDVRKPLAELQKLRGMTPRAVITKHLLDGDDSVFDSLTRPLDDVKKAVTEPAPTPIVNPELAKPAEPGPTRYDADAT.

Residues 2–22 (FGSVGWGELLVLLIVGLVVLG) traverse the membrane as a helical segment. Positions 107-136 (VTEPAPTPIVNPELAKPAEPGPTRYDADAT) are disordered.

Belongs to the TatB family. In terms of assembly, the Tat system comprises two distinct complexes: a TatABC complex, containing multiple copies of TatA, TatB and TatC subunits, and a separate TatA complex, containing only TatA subunits. Substrates initially bind to the TatABC complex, which probably triggers association of the separate TatA complex to form the active translocon.

The protein resides in the cell membrane. Its function is as follows. Part of the twin-arginine translocation (Tat) system that transports large folded proteins containing a characteristic twin-arginine motif in their signal peptide across membranes. Together with TatC, TatB is part of a receptor directly interacting with Tat signal peptides. TatB may form an oligomeric binding site that transiently accommodates folded Tat precursor proteins before their translocation. The chain is Sec-independent protein translocase protein TatB from Mycobacteroides abscessus (strain ATCC 19977 / DSM 44196 / CCUG 20993 / CIP 104536 / JCM 13569 / NCTC 13031 / TMC 1543 / L948) (Mycobacterium abscessus).